The chain runs to 215 residues: 3,4-dihydroxy-2-butanone 4-phosphate synthase (215 aa).

D-ribulose 5-phosphate contacts are provided by residues 38–39 (RE), Asp43, 151–155 (RRGHT), and Glu175. Glu39 provides a ligand contact to Mg(2+). Residue His154 participates in Mg(2+) binding.

This sequence belongs to the DHBP synthase family. As to quaternary structure, homodimer. Requires Mg(2+) as cofactor. Mn(2+) is required as a cofactor.

The catalysed reaction is D-ribulose 5-phosphate = (2S)-2-hydroxy-3-oxobutyl phosphate + formate + H(+). It participates in cofactor biosynthesis; riboflavin biosynthesis; 2-hydroxy-3-oxobutyl phosphate from D-ribulose 5-phosphate: step 1/1. Its function is as follows. Catalyzes the conversion of D-ribulose 5-phosphate to formate and 3,4-dihydroxy-2-butanone 4-phosphate. This is 3,4-dihydroxy-2-butanone 4-phosphate synthase from Haemophilus influenzae (strain 86-028NP).